The following is a 345-amino-acid chain: DNA endonuclease SAE2 (345 aa).

Residues 21 to 172 form a DNA-binding region; sequence SLDELLNVQY…KTRKLLGIEL (152 aa). A Phosphoserine modification is found at S143. A disordered region spans residues 265 to 290; that stretch reads SKSPPGFGRLDFPSTQEGNEDKKKSQ. A Phosphoserine; by CDC28 modification is found at S267.

It belongs to the COM1/SAE2/CtIP family. Dimer or multimer. Interacts with MRE11. Post-translationally, phosphorylated forms accumulate periodically during the unperturbed cell cycle and in response to DNA damage in G2. Phosphorylated by MEC1 and TEL1. Mutagenesis experiments showed that several of the 5 residues located in canonical (S/T)Q motifs, which are favored for phosphorylation by ATM/ATR kinases (Ser-73, Thr-90, Ser-249, Thr-279 and Ser-289) may be phosphorylated. Phosphorylated at Ser-267 by CDC28 which is required to initiate meiotic DSB resection by allowing SPO11 removal from DSB ends.

Its subcellular location is the cytoplasm. The protein resides in the nucleus. Its function is as follows. Endonuclease that cooperates with the MRX complex in processing meiotic and mitotic double-strand breaks by allowing the endonucleolytic removal of SPO11 from the break sites and ensuring both resection and intrachromosomal association of the broken ends. Required for proper recovery from checkpoint-mediated cell cycle arrest after DNA damage. MRX complex and SAE2 remove a small oligonucleotide(s) from the DNA ends to form an early intermediate which is rapidly processed by EXO1 and/or SGS1 to generate extensive tracts of single-stranded DNA that serve as substrate for RAD51. Plays a transitional role in the dissociation of MRE11 from, and the recruitment of RAD52 to, repair foci. Ensures that both ends of a DSB participate in a recombination event and impairs the formation of palindromic structures in the genome. With TEL1, promotes microhomology-mediated end joining (MMEJ) but inhibits non-homologous end joining (NHEJ), likely by regulating MRE11-dependent ssDNA accumulation at DNA break. SAE2 and MRX are particularly important for removal of hairpins, bulky adducts and other irregular end structures. Facilitates telomere length reequilibration and subsequent checkpoint switch off. Involved in homing efficiency of VMA1 intein VDE and in repair of transposon excision sites. This Saccharomyces cerevisiae (strain ATCC 204508 / S288c) (Baker's yeast) protein is DNA endonuclease SAE2 (SAE2).